We begin with the raw amino-acid sequence, 475 residues long: Actin-related protein 10 (475 aa).

It belongs to the actin family.

The protein resides in the cytoplasm. Its subcellular location is the cytoskeleton. The protein is Actin-related protein 10 of Dictyostelium discoideum (Social amoeba).